The primary structure comprises 394 residues: MAKAKFERTKPHVNIGTIGHVDHGKTSLTAAITIVLAKTGGAQATAYDQIDAAPEEKERGITISTAHVEYETKNRHYAHVDCPGHADYVKNMITGAAQMDGAILVVSAADGPMPQTREHILLAKQVGVPAMVVFLNKIDMVDDPDLLELVEMEVRELLSKYGFPGDEIPIIKGSALQALEGKPEGEKAINELMDAVDSYIPQPVRATDKPFLMPIEDVFSISGRGTVVTGRVESGIIKVGEEIEIVGLKDTQKTTCTGVEMFRKLLDEGQAGDNVGILLRGTKREEVERGQVLAKPGSIKPHDKFEAEVYVLSKEEGGRHTPFTNDYRPQFYFRTTDVTGTIKLPADKQWVMPGDNATFTVELIKPIAMQEGLKFSIREGGRTVGAGVVTKINN.

A tr-type G domain is found at 10–204; the sequence is KPHVNIGTIG…AVDSYIPQPV (195 aa). The G1 stretch occupies residues 19-26; sequence GHVDHGKT. Residue 19–26 coordinates GTP; sequence GHVDHGKT. T26 contributes to the Mg(2+) binding site. Residues 60-64 form a G2 region; it reads GITIS. Residues 81–84 form a G3 region; sequence DCPG. GTP is bound by residues 81-85 and 136-139; these read DCPGH and NKID. The segment at 136–139 is G4; that stretch reads NKID. Positions 174 to 176 are G5; it reads SAL.

This sequence belongs to the TRAFAC class translation factor GTPase superfamily. Classic translation factor GTPase family. EF-Tu/EF-1A subfamily. In terms of assembly, monomer.

It localises to the cytoplasm. The enzyme catalyses GTP + H2O = GDP + phosphate + H(+). Its function is as follows. GTP hydrolase that promotes the GTP-dependent binding of aminoacyl-tRNA to the A-site of ribosomes during protein biosynthesis. The polypeptide is Elongation factor Tu (Rickettsia rickettsii).